Consider the following 206-residue polypeptide: Probable N-acetyltransferase 14 (206 aa).

Residues 55 to 206 (LRFVLASFAL…TLVREFSKDL (152 aa)) enclose the N-acetyltransferase domain. A helical transmembrane segment spans residues 57 to 77 (FVLASFALALLLPVFLAVTAV).

Belongs to the camello family.

It localises to the membrane. In terms of biological role, probable acetyltransferase. Its function is as follows. May act as a transcription factor regulating the expression of coproporphyrinogen oxidase by binding to a promoter regulatory element. This is Probable N-acetyltransferase 14 (NAT14) from Macaca fascicularis (Crab-eating macaque).